A 352-amino-acid polypeptide reads, in one-letter code: Secretion system apparatus protein SsaU (352 aa).

The next 4 membrane-spanning stretches (helical) occupy residues 34-54, 89-109, 144-164, and 176-196; these read LIALYLYFHFFTEKMILILIE, LGAGVIVATVGSVFLQVGVVI, LKVIMLSLIFAFFFYYYASTF, and VLVVSSLIKWLWVGVMVFYIV.

The protein belongs to the type III secretion exporter family.

It is found in the cell membrane. Its function is as follows. Part of a type III secretion system. The sequence is that of Secretion system apparatus protein SsaU (ssaU) from Salmonella typhimurium (strain LT2 / SGSC1412 / ATCC 700720).